Reading from the N-terminus, the 396-residue chain is Na(+)/H(+) antiporter NhaA (396 aa).

The next 11 helical transmembrane spans lie at 14–34 (ASGI…NSGL), 59–79 (LLLW…GLEV), 95–115 (TFPA…YTFF), 124–144 (AGWA…MALL), 154–174 (VFLL…IALF), 178–198 (QLSL…LWMN), 205–225 (IGLY…SGVH), 254–274 (ALHP…NAGV), 278–298 (GIGL…GLFV), 328–348 (IFAV…IASL), and 363–383 (LGIL…LRMS).

It belongs to the NhaA Na(+)/H(+) (TC 2.A.33) antiporter family.

The protein localises to the cell inner membrane. It catalyses the reaction Na(+)(in) + 2 H(+)(out) = Na(+)(out) + 2 H(+)(in). Its function is as follows. Na(+)/H(+) antiporter that extrudes sodium in exchange for external protons. The sequence is that of Na(+)/H(+) antiporter NhaA from Aeromonas salmonicida (strain A449).